Consider the following 40-residue polypeptide: Competence and sporulation stimulating factor (40 aa).

Positions 1-35 (MKLKSKLFVICLAAAAIFTAAGVSANAEALDFHVT) are excised as a propeptide.

Belongs to the Phr family. Interacts with RapC and inhibits its interaction with ComA. Post-translationally, secreted with a propeptide domain, which is cleaved in the cell wall by the secreted serine proteases subtilisin, Epr and Vpr to produce a mature signaling peptide. Contains a predicted signal peptide cleavage site in the N-terminal region, however the propeptide is probably subject to only one processing event, at the N-terminal end of the mature peptide.

Its subcellular location is the secreted. It is found in the cytoplasm. The protein resides in the host cell. In terms of biological role, signaling molecule that serves as a cell density signal for both genetic competence development and sporulation. Secreted during production, but the mature peptide acts intracellularly, indicating that it needs to be imported into the cell to function. At low concentrations, CSF stimulates expression of the genes controlled by ComA, a transcriptional factor that regulates the development of genetic competence. It includes the srfA operon, which encodes a small protein, ComS, required for competence development, and the surfactin biosynthetic enzymes. Acts by inhibiting RapC, which regulates the activity of ComA. At high concentrations, it inhibits expression of those same ComA-controlled genes, maybe by inhibiting activity of the kinase ComP. In addition, high concentrations of CSF can stimulate sporulation under some conditions. Also inhibits RapB activity, with lower efficiency, but does not act on RapA. Is probably involved in the quorum sensing control of sporulation. CSF is a species-specific signaling molecule that partially compensates for the lack of ComX-mediated communication between different strains of B.subtilis. Functionally, b.subtilis is a well-characterized soil and water saprophyte, but it is also found in enteric flora of many species, including humans. In this environment, CSF can be transported into human intestinal epithelia via OCTN2, a host cell membrane transporter, and can induce cytoprotective heat shock proteins contributing to intestinal homeostasis. In addition, in non-domesticated swarming strains of B.subtilis, the residual propeptide exposed on the exterior of the cytoplasmic membrane may have an extracellular role in swarming. This function is probably not dependent on CSF. The sequence is that of Competence and sporulation stimulating factor from Bacillus subtilis (strain 168).